We begin with the raw amino-acid sequence, 94 residues long: Long neurotoxin LNTX1 (94 aa).

A signal peptide spans Met-1 to Thr-21. Intrachain disulfides connect Cys-24/Cys-43, Cys-36/Cys-64, Cys-49/Cys-53, Cys-68/Cys-79, and Cys-80/Cys-85.

It belongs to the three-finger toxin family. Long-chain subfamily. Type II alpha-neurotoxin sub-subfamily. In terms of assembly, monomer. In terms of tissue distribution, expressed by the venom gland.

It is found in the secreted. In terms of biological role, binds with high affinity to muscular (alpha-1/CHRNA1) and neuronal (alpha-7/CHRNA7) nicotinic acetylcholine receptor (nAChR) and inhibits acetylcholine from binding to the receptor, thereby impairing neuromuscular and neuronal transmission. Recombinant LNTX1 leads to a functional block of the muscle-type acetylcholine receptors. Has a cytotoxic activity. In Ophiophagus hannah (King cobra), this protein is Long neurotoxin LNTX1.